Reading from the N-terminus, the 403-residue chain is Protein STRICTOSIDINE SYNTHASE-LIKE 13 (403 aa).

Residues 1–42 (MEKKGQHGTYESMMTHHPILCIIALSVLFIAIDPFHMSPIGG) form the signal peptide. Residues asparagine 66 and asparagine 206 are each glycosylated (N-linked (GlcNAc...) asparagine).

This sequence belongs to the strictosidine synthase family.

Its subcellular location is the vacuole. Required for the exine formation during pollen development. In Arabidopsis thaliana (Mouse-ear cress), this protein is Protein STRICTOSIDINE SYNTHASE-LIKE 13.